Consider the following 279-residue polypeptide: Putative Delta(7)-sterol-C5(6)-desaturase 2 (279 aa).

Helical transmembrane passes span 48-68 and 127-147; these read LAGN…IYYL and FLCF…IYWV. In terms of domain architecture, Fatty acid hydroxylase spans 134–263; sequence ALYLVLVEFM…TIWMDWMFGS (130 aa). Positions 148 to 152 match the Histidine box-1 motif; sequence HKELH. A Histidine box-2 motif is present at residues 162-166; that stretch reads HATHH. A helical membrane pass occupies residues 194 to 214; sequence HVIALFIVPIHLITHLSLLFL. The short motif at 239-243 is the Histidine box-3 element; the sequence is HTIHH.

This sequence belongs to the sterol desaturase family. Requires Fe cation as cofactor.

It localises to the endoplasmic reticulum membrane. The catalysed reaction is a Delta(7)-sterol + 2 Fe(II)-[cytochrome b5] + O2 + 2 H(+) = a Delta(5),Delta(7)-sterol + 2 Fe(III)-[cytochrome b5] + 2 H2O. In Arabidopsis thaliana (Mouse-ear cress), this protein is Putative Delta(7)-sterol-C5(6)-desaturase 2 (HDF7).